The primary structure comprises 103 residues: Large ribosomal subunit protein bL21 (103 aa).

The protein belongs to the bacterial ribosomal protein bL21 family. In terms of assembly, part of the 50S ribosomal subunit. Contacts protein L20.

In terms of biological role, this protein binds to 23S rRNA in the presence of protein L20. This chain is Large ribosomal subunit protein bL21, found in Shewanella pealeana (strain ATCC 700345 / ANG-SQ1).